The sequence spans 421 residues: UDP-N-acetylglucosamine 1-carboxyvinyltransferase (421 aa).

22–23 (KN) contacts phosphoenolpyruvate. R93 serves as a coordination point for UDP-N-acetyl-alpha-D-glucosamine. Catalysis depends on C117, which acts as the Proton donor. C117 carries the 2-(S-cysteinyl)pyruvic acid O-phosphothioketal modification. UDP-N-acetyl-alpha-D-glucosamine-binding positions include 122-126 (RPVDL), D308, and I330.

Belongs to the EPSP synthase family. MurA subfamily.

The protein localises to the cytoplasm. The enzyme catalyses phosphoenolpyruvate + UDP-N-acetyl-alpha-D-glucosamine = UDP-N-acetyl-3-O-(1-carboxyvinyl)-alpha-D-glucosamine + phosphate. The protein operates within cell wall biogenesis; peptidoglycan biosynthesis. Its function is as follows. Cell wall formation. Adds enolpyruvyl to UDP-N-acetylglucosamine. This chain is UDP-N-acetylglucosamine 1-carboxyvinyltransferase, found in Pseudomonas savastanoi pv. phaseolicola (strain 1448A / Race 6) (Pseudomonas syringae pv. phaseolicola (strain 1448A / Race 6)).